A 335-amino-acid polypeptide reads, in one-letter code: Glycerol-3-phosphate dehydrogenase [NAD(P)+] (335 aa).

Residues serine 12, tryptophan 13, histidine 33, arginine 34, and lysine 108 each coordinate NADPH. 3 residues coordinate sn-glycerol 3-phosphate: lysine 108, glycine 137, and threonine 139. Alanine 141 serves as a coordination point for NADPH. Sn-glycerol 3-phosphate contacts are provided by lysine 192, aspartate 245, serine 255, arginine 256, and asparagine 257. The active-site Proton acceptor is the lysine 192. NADPH is bound at residue arginine 256. Glutamate 282 lines the NADPH pocket.

The protein belongs to the NAD-dependent glycerol-3-phosphate dehydrogenase family.

The protein localises to the cytoplasm. The catalysed reaction is sn-glycerol 3-phosphate + NAD(+) = dihydroxyacetone phosphate + NADH + H(+). The enzyme catalyses sn-glycerol 3-phosphate + NADP(+) = dihydroxyacetone phosphate + NADPH + H(+). The protein operates within membrane lipid metabolism; glycerophospholipid metabolism. In terms of biological role, catalyzes the reduction of the glycolytic intermediate dihydroxyacetone phosphate (DHAP) to sn-glycerol 3-phosphate (G3P), the key precursor for phospholipid synthesis. This is Glycerol-3-phosphate dehydrogenase [NAD(P)+] from Methylococcus capsulatus (strain ATCC 33009 / NCIMB 11132 / Bath).